The following is a 957-amino-acid chain: Collagen alpha-1(I) chain (957 aa).

Residues 1–957 are disordered; that stretch reads GPMGPSGPRG…PGPPGPPGPP (957 aa). Positions 23–33 are enriched in low complexity; it reads FPGEPGASGPM. Positions 45–59 are enriched in basic and acidic residues; it reads NGDDGEAGKPGRPGE. At S87 the chain carries Phosphoserine. Low complexity-rich tracts occupy residues 95 to 113 and 125 to 138; these read DAGPAGPKGAPGQMGPRGI and PAGARGNDGATGAA. The span at 140–152 shows a compositional bias: pro residues; it reads PPGPTGPAGPPGF. 2 stretches are compositionally biased toward low complexity: residues 186–210 and 219–228; these read AGAAGANGAPGIAGAPGFPGARGPS and SGPKGNSGEP. Gly residues predominate over residues 277–286; it reads GERGGPGSRG. 8 stretches are compositionally biased toward low complexity: residues 330 to 356, 365 to 384, 426 to 453, 488 to 516, 576 to 590, 603 to 618, 649 to 665, and 707 to 731; these read KGITGSPGSPGPDGKTGPPGPAGQDGR, ARGQAGVMGFPGPKGAAGEP, QGPAGSPGFQGIPGPAGPPGEAGKPGEQ, PRGANGAPGNDGAKGDAGAPGAPGSQGAP, AGPSGPAGPTGARGA, AGFAGPPGADGQPGAK, SAGPPGATGFPGAAGRV, and AGEKGAPGADGPAGAPGTPGPQGIA. S579 bears the Phosphoserine mark. Pro residues-rich tracts occupy residues 772 to 782 and 818 to 833; these read PPGPMGPPGIA and AGPPGAPGAPGAPGPV. Over residues 854 to 868 the composition is skewed to low complexity; the sequence is IGPVGARGAAGPQGP. Residues 869–883 are compositionally biased toward basic and acidic residues; the sequence is RGDKGETGEQGDRGI. Residues 902–935 show a composition bias toward low complexity; it reads PGEQGPSGASGPAGPRGPPGSAGSPGKDGINGIP. Positions 937-957 are enriched in pro residues; sequence PIGPPGPRPGPPGPPGPPGPP.

The protein belongs to the fibrillar collagen family. In terms of assembly, trimers of one alpha 2(I) and two alpha 1(I) chains. Prolines at the third position of the tripeptide repeating unit (G-X-Y) are hydroxylated in some or all of the chains. In terms of tissue distribution, forms the fibrils of tendon, ligaments and bones. In bones, the fibrils are mineralized with calcium hydroxyapatite.

Its subcellular location is the secreted. The protein resides in the extracellular space. The protein localises to the extracellular matrix. Functionally, type I collagen is a member of group I collagen (fibrillar forming collagen). The chain is Collagen alpha-1(I) chain from Hippopotamus amphibius (Hippopotamus).